The primary structure comprises 1254 residues: Ubiquitin carboxyl-terminal hydrolase 12 (1254 aa).

Serine 84 carries the post-translational modification Phosphoserine. The DUSP domain maps to 97-199 (NVLEQQRDVV…GSYPVVTNLV (103 aa)). Positions 364–1110 (TGLVNLGNTC…SAYLLFYIRR (747 aa)) constitute a USP domain. Cysteine 373 acts as the Nucleophile in catalysis. The segment at 827-893 (DEGDTEGSEA…EPELTDKPEA (67 aa)) is disordered. The segment covering 854–864 (TVTNNENVNNT) has biased composition (low complexity). Acidic residues predominate over residues 867-883 (RDEDMELTDDVEEDAST). Histidine 1068 acts as the Proton acceptor in catalysis. Serine 1160 is subject to Phosphoserine. Residues 1188–1207 (QDCNDEDDNDDGERTNSGRR) form a disordered region. Acidic residues predominate over residues 1189-1198 (DCNDEDDNDD).

This sequence belongs to the peptidase C19 family. In terms of assembly, interacts with FZO1.

It carries out the reaction Thiol-dependent hydrolysis of ester, thioester, amide, peptide and isopeptide bonds formed by the C-terminal Gly of ubiquitin (a 76-residue protein attached to proteins as an intracellular targeting signal).. In terms of biological role, ubiquitin carboxyl-terminal hydrolase that recognizes ubiquitin chains that stabilize FZO1 and promote mitochondrial fusion. UBP12 deubiquitylates FZO1 only after oligomerization. This is Ubiquitin carboxyl-terminal hydrolase 12 (UBP12) from Saccharomyces cerevisiae (strain ATCC 204508 / S288c) (Baker's yeast).